A 498-amino-acid polypeptide reads, in one-letter code: Nucleoprotein (498 aa).

Residues 1–18 (MASQGTKRSYEQMETDGE) carry the Unconventional nuclear localization signal motif. Residues 1 to 21 (MASQGTKRSYEQMETDGERQN) form a disordered region. Basic and acidic residues predominate over residues 8–21 (RSYEQMETDGERQN). Positions 198-216 (KRGINDRNFWRGENGRKTR) match the Bipartite nuclear localization signal motif.

It belongs to the influenza viruses nucleoprotein family. As to quaternary structure, homomultimerizes to form the nucleocapsid. May bind host exportin-1/XPO1. Binds to viral genomic RNA. Protein-RNA contacts are mediated by a combination of electrostatic interactions between positively charged residues and the phosphate backbone and planar interactions between aromatic side chains and bases. In terms of processing, late in virus-infected cells, may be cleaved from a 56-kDa protein to a 53-kDa protein by a cellular caspase. This cleavage might be a marker for the onset of apoptosis in infected cells or have a specific function in virus host interaction.

The protein resides in the virion. It localises to the host nucleus. Its function is as follows. Encapsidates the negative strand viral RNA, protecting it from nucleases. The encapsidated genomic RNA is termed the ribonucleoprotein (RNP) and serves as template for transcription and replication. The RNP needs to be localized in the host nucleus to start an infectious cycle, but is too large to diffuse through the nuclear pore complex. NP comprises at least 2 nuclear localization signals that are responsible for the active RNP import into the nucleus through cellular importin alpha/beta pathway. Later in the infection, nclear export of RNPs are mediated through viral proteins NEP interacting with M1 which binds nucleoproteins. It is possible that nucleoprotein binds directly host exportin-1/XPO1 and plays an active role in RNPs nuclear export. M1 interaction with RNP seems to hide nucleoprotein's nuclear localization signals. Soon after a virion infects a new cell, M1 dissociates from the RNP under acidification of the virion driven by M2 protein. Dissociation of M1 from RNP unmasks nucleoprotein's nuclear localization signals, targeting the RNP to the nucleus. The sequence is that of Nucleoprotein from Influenza A virus (strain A/Kiev/59/1979 H1N1).